Consider the following 334-residue polypeptide: Biotin synthase (334 aa).

Residues 55-285 (GEGGGVHACS…AHPSKIIKFA (231 aa)) form the Radical SAM core domain. [4Fe-4S] cluster contacts are provided by C73, C77, and C80. [2Fe-2S] cluster contacts are provided by C152, C213, and K283.

The protein belongs to the radical SAM superfamily. Biotin synthase family. As to quaternary structure, homodimer. [4Fe-4S] cluster is required as a cofactor. Requires [2Fe-2S] cluster as cofactor.

The catalysed reaction is (4R,5S)-dethiobiotin + (sulfur carrier)-SH + 2 reduced [2Fe-2S]-[ferredoxin] + 2 S-adenosyl-L-methionine = (sulfur carrier)-H + biotin + 2 5'-deoxyadenosine + 2 L-methionine + 2 oxidized [2Fe-2S]-[ferredoxin]. It functions in the pathway cofactor biosynthesis; biotin biosynthesis; biotin from 7,8-diaminononanoate: step 2/2. Catalyzes the conversion of dethiobiotin (DTB) to biotin by the insertion of a sulfur atom into dethiobiotin via a radical-based mechanism. The polypeptide is Biotin synthase (Chlorobaculum parvum (strain DSM 263 / NCIMB 8327) (Chlorobium vibrioforme subsp. thiosulfatophilum)).